The chain runs to 482 residues: UDP-N-acetylmuramate--L-alanine ligase (482 aa).

The disordered stretch occupies residues 1 to 26 (MPQLPMTDSAPLPTPAPSSPAQPSAQ). Residue 140–146 (GTHGKTT) coordinates ATP.

The protein belongs to the MurCDEF family.

It is found in the cytoplasm. It catalyses the reaction UDP-N-acetyl-alpha-D-muramate + L-alanine + ATP = UDP-N-acetyl-alpha-D-muramoyl-L-alanine + ADP + phosphate + H(+). It functions in the pathway cell wall biogenesis; peptidoglycan biosynthesis. Functionally, cell wall formation. This Deinococcus radiodurans (strain ATCC 13939 / DSM 20539 / JCM 16871 / CCUG 27074 / LMG 4051 / NBRC 15346 / NCIMB 9279 / VKM B-1422 / R1) protein is UDP-N-acetylmuramate--L-alanine ligase.